A 236-amino-acid polypeptide reads, in one-letter code: Uridylate kinase (236 aa).

10–13 (KLSG) lines the ATP pocket. Glycine 52 contacts UMP. Residues glycine 53 and arginine 57 each coordinate ATP. UMP-binding positions include aspartate 72 and 133 to 140 (TGNPFFTT). The ATP site is built by threonine 160, tyrosine 166, and aspartate 169.

The protein belongs to the UMP kinase family. As to quaternary structure, homohexamer.

It localises to the cytoplasm. The enzyme catalyses UMP + ATP = UDP + ADP. It functions in the pathway pyrimidine metabolism; CTP biosynthesis via de novo pathway; UDP from UMP (UMPK route): step 1/1. Inhibited by UTP. In terms of biological role, catalyzes the reversible phosphorylation of UMP to UDP. This chain is Uridylate kinase, found in Phocaeicola vulgatus (strain ATCC 8482 / DSM 1447 / JCM 5826 / CCUG 4940 / NBRC 14291 / NCTC 11154) (Bacteroides vulgatus).